The following is a 292-amino-acid chain: MPELPEVEVVRRGLERHIVGASIDSVDILHPRAIRRHLPGAADLAGQLTGERIASADRRGKYLWLVLEPSTVALVVHLGMSGQMLVQPPELPTEKHLRIRARLDSGLDLRFVDQRTFGGWALAPLVDVDGSLVPDSVAHIARDPLDPRFDLAATVKVVRGKHTEVKRALLDQTVVSGIGNIYADEALWRARIHGNRLTDRLSGPKVREVLTAAQEVMREALTQGGTSFDALYVNVNGESGYFDRSLSAYGQEDRPCPRCGTAIRREKFMNRSSFSCPKCQPAPRRSLAKSSV.

P2 acts as the Schiff-base intermediate with DNA in catalysis. Catalysis depends on E3, which acts as the Proton donor. The active-site Proton donor; for beta-elimination activity is K61. DNA is bound by residues H96, R115, and K161. The FPG-type zinc-finger motif lies at 247–281 (SAYGQEDRPCPRCGTAIRREKFMNRSSFSCPKCQP). Residue R271 is the Proton donor; for delta-elimination activity of the active site.

The protein belongs to the FPG family. Monomer. Zn(2+) serves as cofactor.

It catalyses the reaction Hydrolysis of DNA containing ring-opened 7-methylguanine residues, releasing 2,6-diamino-4-hydroxy-5-(N-methyl)formamidopyrimidine.. It carries out the reaction 2'-deoxyribonucleotide-(2'-deoxyribose 5'-phosphate)-2'-deoxyribonucleotide-DNA = a 3'-end 2'-deoxyribonucleotide-(2,3-dehydro-2,3-deoxyribose 5'-phosphate)-DNA + a 5'-end 5'-phospho-2'-deoxyribonucleoside-DNA + H(+). Functionally, involved in base excision repair of DNA damaged by oxidation or by mutagenic agents. Acts as a DNA glycosylase that recognizes and removes damaged bases. Has a preference for oxidized purines, such as 7,8-dihydro-8-oxoguanine (8-oxoG). Has AP (apurinic/apyrimidinic) lyase activity and introduces nicks in the DNA strand. Cleaves the DNA backbone by beta-delta elimination to generate a single-strand break at the site of the removed base with both 3'- and 5'-phosphates. The polypeptide is Formamidopyrimidine-DNA glycosylase (Rhodococcus jostii (strain RHA1)).